Consider the following 1076-residue polypeptide: Structural maintenance of chromosomes protein 5 (1076 aa).

An ATP-binding site is contributed by 49–56; it reads GHNGSGKS. The stretch at 190–415 forms a coiled coil; it reads STSIEDKCTT…KRDEEQNSQL (226 aa). Residues 375–410 show a composition bias toward basic and acidic residues; sequence EQKYSTAERDSRQEEDAIQKKSYEMRQLENKKRDEE. The disordered stretch occupies residues 375-420; the sequence is EQKYSTAERDSRQEEDAIQKKSYEMRQLENKKRDEEQNSQLNRQDR. A flexible hinge region spans residues 416-617; it reads NRQDRYRVLQ…ANTWRDQFFK (202 aa). Coiled-coil stretches lie at residues 627 to 713 and 749 to 786; these read NSIL…EKKA and KSRVNKSNSEAETHRSKLEDLKSVKDAAEDLLKTALNH.

It belongs to the SMC family. SMC5 subfamily. As to quaternary structure, interacts with smc-6. As to expression, expressed in the germline (at protein level).

It localises to the nucleus. The protein resides in the chromosome. Core component of the smc-5/smc-6 complex. Functions in DNA double strand break repair by promoting sister-chromatid homologous recombination during meiosis. Acts in a DNA repair pathway for removal of ionizing radiation- and ultraviolet (UV) radiation-induced DNA lesions that is distinct from classical nucleotide excision repair and the translesion synthesis pathway. Also involved in the recovery of stalled replication forks. This Caenorhabditis elegans protein is Structural maintenance of chromosomes protein 5.